We begin with the raw amino-acid sequence, 149 residues long: 2S seed storage albumin protein (149 aa).

The signal sequence occupies residues 1 to 22 (MKLFIILATATLLIAATQATYP). Disulfide bonds link C38–C98, C52–C87, C88–C133, and C100–C140. The tract at residues 121–128 (EGVRDLKE) is igE-binding.

It belongs to the 2S seed storage albumins family. Expressed in seeds (at protein level).

Seed storage protein. This Fagopyrum esculentum (Common buckwheat) protein is 2S seed storage albumin protein.